The sequence spans 308 residues: Pantothenate kinase (308 aa).

Residue G90–S97 coordinates ATP.

This sequence belongs to the prokaryotic pantothenate kinase family.

The protein localises to the cytoplasm. It catalyses the reaction (R)-pantothenate + ATP = (R)-4'-phosphopantothenate + ADP + H(+). It participates in cofactor biosynthesis; coenzyme A biosynthesis; CoA from (R)-pantothenate: step 1/5. This Sorangium cellulosum (strain So ce56) (Polyangium cellulosum (strain So ce56)) protein is Pantothenate kinase.